Consider the following 161-residue polypeptide: Nucleotide-binding protein ABO_0048 (161 aa).

Belongs to the YajQ family.

Its function is as follows. Nucleotide-binding protein. The protein is Nucleotide-binding protein ABO_0048 of Alcanivorax borkumensis (strain ATCC 700651 / DSM 11573 / NCIMB 13689 / SK2).